The chain runs to 314 residues: Acetaldehyde dehydrogenase (314 aa).

Residue 14–17 (SGNI) participates in NAD(+) binding. Cys-132 serves as the catalytic Acyl-thioester intermediate. Residues 163 to 171 (SAGPGTRAN) and Asn-291 each bind NAD(+).

This sequence belongs to the acetaldehyde dehydrogenase family.

The catalysed reaction is acetaldehyde + NAD(+) + CoA = acetyl-CoA + NADH + H(+). The sequence is that of Acetaldehyde dehydrogenase from Polaromonas sp. (strain JS666 / ATCC BAA-500).